The chain runs to 181 residues: Oligoribonuclease (181 aa).

The Exonuclease domain occupies 8–171 (LIWIDLEMTG…DDIRESVAEL (164 aa)). The active site involves Tyr129.

Belongs to the oligoribonuclease family.

It localises to the cytoplasm. 3'-to-5' exoribonuclease specific for small oligoribonucleotides. In Yersinia enterocolitica serotype O:8 / biotype 1B (strain NCTC 13174 / 8081), this protein is Oligoribonuclease.